Consider the following 66-residue polypeptide: Pancreatic polypeptide prohormone (66 aa).

At tyrosine 36 the chain carries Tyrosine amide. A propeptide spanning residues 60–66 (ELSPMDV) is cleaved from the precursor.

The protein belongs to the NPY family.

It is found in the secreted. Hormone secreted by pancreatic cells that acts as a regulator of pancreatic and gastrointestinal functions probably by signaling through the G protein-coupled receptor NPY4R2. The sequence is that of Pancreatic polypeptide prohormone (PPY) from Felis catus (Cat).